A 1161-amino-acid polypeptide reads, in one-letter code: Lethal(2) giant larvae protein (1161 aa).

Positions 15–86 are phospho-regulated basic and hydrophobic (PRBH) motif; the sequence is DRHRLQKDLF…NNSASELNVQ (72 aa). WD repeat units follow at residues 39 to 72, 82 to 128, 131 to 167, 189 to 223, 231 to 263, 278 to 320, 328 to 358, and 380 to 464; these read SALA…LYGQ, ELNV…DGKL, VSSL…EPVI, SIRQ…QRAY, SVGL…PEPP, SINR…GHKV, VIDF…AYDL, and TCNY…YNFK. Serine 473 and serine 484 each carry phosphoserine. WD repeat units follow at residues 513–594 and 603–664; these read KKIA…SGVL and TCMA…LRES. At serine 679 the chain carries Phosphoserine. WD repeat units lie at residues 708-778, 787-832, 837-927, and 941-964; these read VRCL…KEIQ, GISI…LKPI, LTAN…LNAA, and CFTN…ALAT. 6 positions are modified to phosphoserine: serine 808, serine 869, serine 876, serine 887, serine 889, and serine 893. Phosphoserine is present on serine 1013. Residues 1141 to 1161 form a disordered region; that stretch reads EKTNGDNKIGTPKTAPEESQF.

It belongs to the WD repeat L(2)GL family. May form multimeric complexes. Interacts with mahj. Interacts with aPKC; leading to phosphorylation. Interacts with ball. Phosphorylated by aPKC which lowers lipid affinity and promotes dissociation from the cell cortex. In developing oocytes, aPKC-mediated phosphorylation restricts activity to the oocyte posterior and is required for oocyte polarity formation. Expressed in the epithelial cells of the digestive tract and in gonads.

The protein resides in the cytoplasm. It is found in the cell cortex. In terms of biological role, essential for the development of polarized epithelia, for cell polarity associated with asymmetric cell division of neuroblasts during development, and for oocyte polarity formation. Promotes the formation of actin-rich projections at the oocyte cortex and the posterior enrichment of par-1 which is required for oocyte polarization. Regulates the localization of axis-specifying morphogens such as stau and grk. Functionally, has an essential role in control of cell proliferation and differentiation during development and could act as a tumor suppressor. Its function is as follows. Has an accessory function in control of cell proliferation and differentiation during development. The protein is Lethal(2) giant larvae protein (l(2)gl) of Drosophila melanogaster (Fruit fly).